Here is a 593-residue protein sequence, read N- to C-terminus: ATPase family AAA domain-containing protein 3-B (593 aa).

3 disordered regions span residues 1–64, 109–129, and 145–164; these read MSWL…LDQS, EEKR…AQYQ, and QLQN…KQEA. Over 1–242 the chain is Mitochondrial intermembrane; it reads MSWLFGLNRG…FRTFISDWDK (242 aa). Pro residues predominate over residues 12-27; sequence PEPPGVPGFPEPPSPP. Basic and acidic residues-rich tracts occupy residues 33–44, 53–64, 109–121, and 150–164; these read GGDKNRPKDKWS, RAAKAARELDQS, EEKR…ETKQ, and ENLR…KQEA. A coiled-coil region spans residues 51–215; that stretch reads LERAAKAARE…QIRLKAAEHR (165 aa). Residues 243-260 form a helical membrane-spanning segment; the sequence is VTATVAGLTLLAVGVYTA. Topologically, residues 261–593 are mitochondrial matrix; sequence KNGTGVAGRY…LQPLLEGTPV (333 aa). 348–355 is an ATP binding site; sequence GPPGTGKT. Residues 570-580 are compositionally biased toward basic and acidic residues; sequence AEGKESTKEIG. The interval 570–593 is disordered; sequence AEGKESTKEIGKNPLQPLLEGTPV.

The protein belongs to the AAA ATPase family. Can form homooligomers. Homodimer formation at the N-terminus may be regulated by ATP and is required for the interaction with the inner surface of the mitochondrial outer membrane and correct mitochondrial homeostasis.

It is found in the mitochondrion inner membrane. It localises to the mitochondrion matrix. Its subcellular location is the mitochondrion nucleoid. The catalysed reaction is ATP + H2O = ADP + phosphate + H(+). In terms of biological role, essential for mitochondrial network organization, mitochondrial metabolism and cell growth at organism and cellular level. May play an important role in mitochondrial protein synthesis. May also participate in mitochondrial DNA replication. May bind to mitochondrial DNA D-loops and contribute to nucleoid stability. Required for enhanced channeling of cholesterol for hormone-dependent steroidogenesis. Involved in mitochondrial-mediated antiviral innate immunity. Required to protect mitochondria from the PERK-mediated unfolded protein response: specifically inhibits the activity of EIF2AK3/PERK at mitochondria-endoplasmic reticulum contact sites, thereby providing a safe haven for mitochondrial protein translation during endoplasmic reticulum stress. Ability to inhibit EIF2AK3/PERK is independent of its ATPase activity. Also involved in the mitochondrial DNA damage response by promoting signaling between damaged genomes and the mitochondrial membrane, leading to activation of the integrated stress response (ISR). The chain is ATPase family AAA domain-containing protein 3-B (atad3-b) from Xenopus laevis (African clawed frog).